The primary structure comprises 1302 residues: Multidrug resistance protein homolog 65 (1302 aa).

Residues 1-23 (MERDEVSTSSSEGKSQEEAPMAE) are disordered. Residues 1–48 (MERDEVSTSSSEGKSQEEAPMAEGLEPTEPIAFLKLFRFSTYGEIGWL) lie on the Cytoplasmic side of the membrane. An ABC transmembrane type-1 1 domain is found at 48–369 (LFFGFIMCCI…TAPFLESFAT (322 aa)). The helical transmembrane segment at 49–69 (FFGFIMCCIKALTLPAVVIIY) threads the bilayer. At 70–118 (SEFTSMLVDRAMQFGTSSNVHALPLFGGGKTLTNASREENNEALYDDSI) the chain is on the extracellular side. N-linked (GlcNAc...) asparagine glycosylation is present at N103. A helical transmembrane segment spans residues 119 to 147 (SYGILLTIASVVMFISGIFSVDVFNMVAL). Residues 148–194 (RQVTRMRIKLFSSVIRQDIGWHDLASKQNFTQSMVDDVEKIRDGISE) lie on the Cytoplasmic side of the membrane. Residues 195–215 (KVGHFVYLVVGFIITVAISFS) form a helical membrane-spanning segment. Topologically, residues 216 to 223 (YGWKLTLA) are extracellular. The helical transmembrane segment at 224–242 (VSSYIPLVILLNYYVAKFQ) threads the bilayer. Residues 243–302 (GKLTAREQESYAGAGNLAEEILSSIRTVVSFGGEKSEVQRYENFLVPARKASQWKGAFSG) lie on the Cytoplasmic side of the membrane. Residues 303–323 (LSDAVLKSMLYLSCAGAFWYG) traverse the membrane as a helical segment. Residues 324 to 341 (VNLIIDDRNVENKEYTPA) lie on the Extracellular side of the membrane. A helical transmembrane segment spans residues 342–362 (ILMIAFFGIIVGADNIARTAP). At 363–731 (FLESFATARG…LQLAKQEWCY (369 aa)) the chain is on the cytoplasmic side. The 237-residue stretch at 405 to 641 (VEFQDVFFRY…EGAYYNMVRA (237 aa)) folds into the ABC transporter 1 domain. 440 to 447 (GSSGCGKS) is a binding site for ATP. A helical transmembrane segment spans residues 732–753 (LILGTISAVAVGFLYPAFAVIF). Residues 732-1020 (LILGTISAVA…SLAFTPAFSA (289 aa)) enclose the ABC transmembrane type-1 2 domain. The Extracellular segment spans residues 754–776 (GEFYAALAEKDPEDALRRTAVLS). Residues 777–798 (WACLGLAFLTGLVCFLQTYLFN) form a helical membrane-spanning segment. The Cytoplasmic portion of the chain corresponds to 799–852 (YAGIWLTTRMRAMTFNAMVNQEVGWFDDENNSVGALSARLSGEAVDIQGAIGYP). A helical membrane pass occupies residues 853–873 (LSGMIQALSNFISSVSVAMYY). Residue N874 is a topological domain, extracellular. The helical transmembrane segment at 875–894 (WKLALLCLANCPIIVGSVIL) threads the bilayer. At 895–956 (EAKMMSNAVV…VEVLIRQKLR (62 aa)) the chain is on the cytoplasmic side. Residues 957 to 977 (WRGVLNSTMQASAFFAYAVAL) traverse the membrane as a helical segment. Over 978–993 (CYGGVLVSEGQLPFQD) the chain is Extracellular. A helical membrane pass occupies residues 994–1014 (IIKVSETLLYGSMMLAQSLAF). At 1015 to 1302 (TPAFSAALIA…AKLHKTQKDH (288 aa)) the chain is on the cytoplasmic side. Residues 1059-1298 (VRYRGIQFRY…GGIYAKLHKT (240 aa)) form the ABC transporter 2 domain. 1094-1101 (GHSGCGKS) contacts ATP.

This sequence belongs to the ABC transporter superfamily. ABCB family. Multidrug resistance exporter (TC 3.A.1.201) subfamily.

It is found in the membrane. The enzyme catalyses ATP + H2O + xenobioticSide 1 = ADP + phosphate + xenobioticSide 2.. This chain is Multidrug resistance protein homolog 65 (Mdr65), found in Drosophila melanogaster (Fruit fly).